The chain runs to 384 residues: Ribosomal RNA large subunit methyltransferase G (384 aa).

Belongs to the methyltransferase superfamily. RlmG family.

It localises to the cytoplasm. The catalysed reaction is guanosine(1835) in 23S rRNA + S-adenosyl-L-methionine = N(2)-methylguanosine(1835) in 23S rRNA + S-adenosyl-L-homocysteine + H(+). In terms of biological role, specifically methylates the guanine in position 1835 (m2G1835) of 23S rRNA. This is Ribosomal RNA large subunit methyltransferase G from Pseudoalteromonas atlantica (strain T6c / ATCC BAA-1087).